Consider the following 478-residue polypeptide: Ribulose bisphosphate carboxylase large chain (478 aa).

Residues 1-2 (MS) constitute a propeptide that is removed on maturation. P3 carries the post-translational modification N-acetylproline. At K14 the chain carries N6,N6,N6-trimethyllysine. N123 and T173 together coordinate substrate. The active-site Proton acceptor is the K175. Residue K177 coordinates substrate. Mg(2+) is bound by residues K201, D203, and E204. Position 201 is an N6-carboxylysine (K201). Catalysis depends on H294, which acts as the Proton acceptor. Substrate contacts are provided by R295, H327, and S379.

This sequence belongs to the RuBisCO large chain family. Type I subfamily. As to quaternary structure, heterohexadecamer of 8 large chains and 8 small chains; disulfide-linked. The disulfide link is formed within the large subunit homodimers. The cofactor is Mg(2+). In terms of processing, the disulfide bond which can form in the large chain dimeric partners within the hexadecamer appears to be associated with oxidative stress and protein turnover.

The protein resides in the plastid. The protein localises to the chloroplast. The enzyme catalyses 2 (2R)-3-phosphoglycerate + 2 H(+) = D-ribulose 1,5-bisphosphate + CO2 + H2O. It carries out the reaction D-ribulose 1,5-bisphosphate + O2 = 2-phosphoglycolate + (2R)-3-phosphoglycerate + 2 H(+). Its function is as follows. RuBisCO catalyzes two reactions: the carboxylation of D-ribulose 1,5-bisphosphate, the primary event in carbon dioxide fixation, as well as the oxidative fragmentation of the pentose substrate in the photorespiration process. Both reactions occur simultaneously and in competition at the same active site. This is Ribulose bisphosphate carboxylase large chain from Drimys granadensis.